Consider the following 382-residue polypeptide: Saccharopine dehydrogenase [NAD(+), L-lysine-forming] (382 aa).

2 residues coordinate L-saccharopine: arginine 20 and lysine 79. Residue lysine 79 is the Proton acceptor of the active site. Histidine 98 acts as the Proton donor in catalysis. Glutamine 103 contacts L-saccharopine. NAD(+) is bound at residue arginine 132. Residues arginine 133 and phenylalanine 137 each contribute to the L-saccharopine site. NAD(+) contacts are provided by residues 215–216 (GR), aspartate 239, threonine 243, tyrosine 263, and valine 290. Residues cysteine 217 and cysteine 261 are joined by a disulfide bond. 291–293 (SAD) is an L-saccharopine binding site. 330–333 (IDHL) serves as a coordination point for NAD(+).

The protein belongs to the AlaDH/PNT family. In terms of assembly, monomer.

The catalysed reaction is L-saccharopine + NAD(+) + H2O = L-lysine + 2-oxoglutarate + NADH + H(+). The protein operates within amino-acid biosynthesis; L-lysine biosynthesis via AAA pathway; L-lysine from L-alpha-aminoadipate (fungal route): step 3/3. In terms of biological role, catalyzes the NAD(+)-dependent cleavage of saccharopine to L-lysine and 2-oxoglutarate, the final step in the alpha-aminoadipate (AAA) pathway for lysin biosynthesis. The chain is Saccharopine dehydrogenase [NAD(+), L-lysine-forming] from Candida albicans (strain SC5314 / ATCC MYA-2876) (Yeast).